Reading from the N-terminus, the 138-residue chain is Large ribosomal subunit protein uL16 (138 aa).

This sequence belongs to the universal ribosomal protein uL16 family. As to quaternary structure, part of the 50S ribosomal subunit.

Functionally, binds 23S rRNA and is also seen to make contacts with the A and possibly P site tRNAs. This Chlamydia caviae (strain ATCC VR-813 / DSM 19441 / 03DC25 / GPIC) (Chlamydophila caviae) protein is Large ribosomal subunit protein uL16.